The primary structure comprises 158 residues: Pathogenesis-related protein 1 (158 aa).

It belongs to the BetVI family.

It localises to the cytoplasm. This is Pathogenesis-related protein 1 (PR1) from Asparagus officinalis (Garden asparagus).